Here is a 47-residue protein sequence, read N- to C-terminus: Thionin (47 aa).

4 disulfides stabilise this stretch: C3–C41, C4–C33, C12–C31, and C16–C27.

This sequence belongs to the plant thionin (TC 1.C.44) family. 4 C-C subfamily.

The protein localises to the secreted. Thionins are small plant proteins which are toxic to animal cells. They seem to exert their toxic effect at the level of the cell membrane. Their precise function is not known. The protein is Thionin (THI1) of Pyrularia pubera (Buffalo nut).